The chain runs to 801 residues: Bromodomain-containing protein 2 (801 aa).

Position 1 is an N-acetylmethionine (Met-1). At Thr-6 the chain carries Phosphothreonine. Ser-37 is modified (phosphoserine). Residues 53-73 (ALQLTPANPPPPEVSNPKKPG) form a disordered region. The 107-residue stretch at 74–180 (RVTNQLQYLH…KIFLQKVASM (107 aa)) folds into the Bromo 1 domain. Positions 112, 155, 156, 157, 160, and 161 each coordinate a protein. Disordered regions lie at residues 268–349 (PPAQ…LSEQ), 456–647 (EPLE…YDEK), and 737–801 (EKRL…SDSG). Positions 285 to 298 (TTTPTPTAILAPGS) are enriched in low complexity. Ser-298, Ser-301, and Ser-305 each carry phosphoserine. Residues 316–332 (MRRESGRPIKPPRKDLP) show a composition bias toward basic and acidic residues. The Bromo 2 domain maps to 344 to 453 (GKLSEQLKHC…DVFEFRYAKM (110 aa)). The segment covering 481–514 (SSEESSSESSSEEEEEEDEEDEEEEESESSDSEE) has biased composition (acidic residues). The segment covering 544–566 (KPKRKREKKEKKKKRKAEKHRGR) has biased composition (basic residues). Positions 555–559 (KKKRK) match the Nuclear localization signal motif. The span at 592–612 (GSGGGSAALGPSGFGPSGGSG) shows a compositional bias: gly residues. The NET domain maps to 632 to 714 (DSEEEEESRP…SCLRKKPRKP (83 aa)). A Phosphoserine modification is found at Ser-633. Residues 763-795 (SSSAQQVAVSRLSASSSSSDSSSSSSSSSSSDT) are compositionally biased toward low complexity.

It belongs to the BET family. In terms of assembly, homodimer. Interacts with E2F1. Interacts with (acetylated) STAT3; promoting STAT3 recruitment to chromatin. Interacts with CTCF; promoting BRD2 recruitment to chromatin. As to quaternary structure, (Microbial infection) Interacts with herpes virus 8 protein LANA1.

It is found in the nucleus. The protein localises to the chromosome. With respect to regulation, inhibited by JQ1, a thieno-triazolo-1,4-diazepine derivative, which specifically inhibits members of the BET family (BRD2, BRD3 and BRD4). The first bromo domain is inhibited by GSK778 (iBET-BD1), which specifically inhibits the first bromo domain of members of the BET family (BRD2, BRD3 and BRD4). The second bromo domain is inhibited by ABBV-744, which specifically inhibits the second bromo domain of members of the BET family (BRD2, BRD3 and BRD4). The second bromo domain is inhibited by GSK046 (iBET-BD2), which specifically inhibits the second bromo domain of members of the BET family (BRD2, BRD3 and BRD4). Chromatin reader protein that specifically recognizes and binds histone H4 acetylated at 'Lys-5' and 'Lys-12' (H4K5ac and H4K12ac, respectively), thereby controlling gene expression and remodeling chromatin structures. Recruits transcription factors and coactivators to target gene sites, and activates RNA polymerase II machinery for transcriptional elongation. Plays a key role in genome compartmentalization via its association with CTCF and cohesin: recruited to chromatin by CTCF and promotes formation of topologically associating domains (TADs) via its ability to bind acetylated histones, contributing to CTCF boundary formation and enhancer insulation. Also recognizes and binds acetylated non-histone proteins, such as STAT3. Involved in inflammatory response by regulating differentiation of naive CD4(+) T-cells into T-helper Th17: recognizes and binds STAT3 acetylated at 'Lys-87', promoting STAT3 recruitment to chromatin. In addition to acetylated lysines, also recognizes and binds lysine residues on histones that are both methylated and acetylated on the same side chain to form N6-acetyl-N6-methyllysine (Kacme), an epigenetic mark of active chromatin associated with increased transcriptional initiation. Specifically binds histone H4 acetyl-methylated at 'Lys-5' and 'Lys-12' (H4K5acme and H4K12acme, respectively). This chain is Bromodomain-containing protein 2, found in Homo sapiens (Human).